A 156-amino-acid chain; its full sequence is Small ribosomal subunit protein uS7 (156 aa).

Belongs to the universal ribosomal protein uS7 family. As to quaternary structure, part of the 30S ribosomal subunit. Contacts proteins S9 and S11.

Its function is as follows. One of the primary rRNA binding proteins, it binds directly to 16S rRNA where it nucleates assembly of the head domain of the 30S subunit. Is located at the subunit interface close to the decoding center, probably blocks exit of the E-site tRNA. This chain is Small ribosomal subunit protein uS7, found in Campylobacter concisus (strain 13826).